The primary structure comprises 95 residues: Co-chaperonin GroES (95 aa).

The span at 12–22 shows a compositional bias: basic and acidic residues; it reads VKPSPAEEKTK. The interval 12 to 38 is disordered; that stretch reads VKPSPAEEKTKGGLYIPDSGKEKPQHG.

Belongs to the GroES chaperonin family. As to quaternary structure, heptamer of 7 subunits arranged in a ring. Interacts with the chaperonin GroEL.

The protein localises to the cytoplasm. Functionally, together with the chaperonin GroEL, plays an essential role in assisting protein folding. The GroEL-GroES system forms a nano-cage that allows encapsulation of the non-native substrate proteins and provides a physical environment optimized to promote and accelerate protein folding. GroES binds to the apical surface of the GroEL ring, thereby capping the opening of the GroEL channel. The protein is Co-chaperonin GroES of Chloroherpeton thalassium (strain ATCC 35110 / GB-78).